A 104-amino-acid polypeptide reads, in one-letter code: NADH-quinone oxidoreductase subunit K (104 aa).

Transmembrane regions (helical) follow at residues 4-24 (VPAS…LFGA), 31-51 (VIVL…LVAF), and 67-87 (LFTM…LIAL).

This sequence belongs to the complex I subunit 4L family. In terms of assembly, NDH-1 is composed of 14 different subunits. Subunits NuoA, H, J, K, L, M, N constitute the membrane sector of the complex.

Its subcellular location is the cell membrane. It catalyses the reaction a quinone + NADH + 5 H(+)(in) = a quinol + NAD(+) + 4 H(+)(out). In terms of biological role, NDH-1 shuttles electrons from NADH, via FMN and iron-sulfur (Fe-S) centers, to quinones in the respiratory chain. The immediate electron acceptor for the enzyme in this species is believed to be a menaquinone. Couples the redox reaction to proton translocation (for every two electrons transferred, four hydrogen ions are translocated across the cytoplasmic membrane), and thus conserves the redox energy in a proton gradient. This Bacillus cereus (strain AH820) protein is NADH-quinone oxidoreductase subunit K.